The following is a 183-amino-acid chain: UPF0340 protein LCA_1354 (183 aa).

The protein belongs to the UPF0340 family.

This chain is UPF0340 protein LCA_1354, found in Latilactobacillus sakei subsp. sakei (strain 23K) (Lactobacillus sakei subsp. sakei).